Consider the following 506-residue polypeptide: (+)-vincadifformine 19-hydroxylase (506 aa).

Residues Met-1 to Asp-4 are Lumenal-facing. Residues Glu-5–Leu-25 traverse the membrane as a helical segment. The Cytoplasmic portion of the chain corresponds to Arg-26–Met-506. Cys-450 is a heme binding site.

This sequence belongs to the cytochrome P450 family. Requires heme as cofactor. As to expression, accumulates progressively in roots.

Its subcellular location is the endoplasmic reticulum membrane. It catalyses the reaction (+)-vincadifformine + reduced [NADPH--hemoprotein reductase] + O2 = (+)-minovincinine + oxidized [NADPH--hemoprotein reductase] + H2O + H(+). It participates in alkaloid biosynthesis. Its activity is regulated as follows. The enantiomer (-)-vincadifformine acts as a competitive inhibitor. Its function is as follows. Component of the monoterpenoid indole alkaloids (MIAs, e.g. echitovenine, tabersonine, lochnericine, 19-hydroxytabersonine and horhammericine) biosynthetic pathway; MIAs are used in cancer treatment and other medical applications. Cytochrome P450 catalyzing the hydroxylation of (+)-vincadifformine to (+)-minovincinine. The protein is (+)-vincadifformine 19-hydroxylase of Catharanthus roseus (Madagascar periwinkle).